Consider the following 380-residue polypeptide: Cytochrome b (380 aa).

The next 4 helical transmembrane spans lie at 34–54 (FGSL…LLAM), 78–99 (WLIR…YLHI), 114–134 (WNTG…GYVL), and 179–199 (FFAL…IHLT). The heme b site is built by His-84 and His-98. His-183 and His-197 together coordinate heme b. His-202 lines the a ubiquinone pocket. The next 4 helical transmembrane spans lie at 227–247 (TKDL…ALFS), 289–309 (LGGV…PFLH), 321–341 (LSQI…WVGS), and 348–368 (FIII…ILFP).

This sequence belongs to the cytochrome b family. As to quaternary structure, the cytochrome bc1 complex contains 11 subunits: 3 respiratory subunits (MT-CYB, CYC1 and UQCRFS1), 2 core proteins (UQCRC1 and UQCRC2) and 6 low-molecular weight proteins (UQCRH/QCR6, UQCRB/QCR7, UQCRQ/QCR8, UQCR10/QCR9, UQCR11/QCR10 and a cleavage product of UQCRFS1). This cytochrome bc1 complex then forms a dimer. It depends on heme b as a cofactor.

Its subcellular location is the mitochondrion inner membrane. Functionally, component of the ubiquinol-cytochrome c reductase complex (complex III or cytochrome b-c1 complex) that is part of the mitochondrial respiratory chain. The b-c1 complex mediates electron transfer from ubiquinol to cytochrome c. Contributes to the generation of a proton gradient across the mitochondrial membrane that is then used for ATP synthesis. In Aerodramus vulcanorum (Volcano swiftlet), this protein is Cytochrome b (MT-CYB).